A 308-amino-acid chain; its full sequence is Bifunctional protein FolD (308 aa).

NADP(+) contacts are provided by residues 171–173 (GRS), serine 198, and isoleucine 239.

Belongs to the tetrahydrofolate dehydrogenase/cyclohydrolase family. Homodimer.

The catalysed reaction is (6R)-5,10-methylene-5,6,7,8-tetrahydrofolate + NADP(+) = (6R)-5,10-methenyltetrahydrofolate + NADPH. It catalyses the reaction (6R)-5,10-methenyltetrahydrofolate + H2O = (6R)-10-formyltetrahydrofolate + H(+). The protein operates within one-carbon metabolism; tetrahydrofolate interconversion. Catalyzes the oxidation of 5,10-methylenetetrahydrofolate to 5,10-methenyltetrahydrofolate and then the hydrolysis of 5,10-methenyltetrahydrofolate to 10-formyltetrahydrofolate. This chain is Bifunctional protein FolD, found in Borreliella burgdorferi (strain ZS7) (Borrelia burgdorferi).